We begin with the raw amino-acid sequence, 370 residues long: UDP-N-acetylglucosamine--N-acetylmuramyl-(pentapeptide) pyrophosphoryl-undecaprenol N-acetylglucosamine transferase (370 aa).

UDP-N-acetyl-alpha-D-glucosamine contacts are provided by residues 15–17 (TGG), N129, R170, S200, I253, and Q298.

The protein belongs to the glycosyltransferase 28 family. MurG subfamily.

The protein localises to the cell inner membrane. It catalyses the reaction di-trans,octa-cis-undecaprenyl diphospho-N-acetyl-alpha-D-muramoyl-L-alanyl-D-glutamyl-meso-2,6-diaminopimeloyl-D-alanyl-D-alanine + UDP-N-acetyl-alpha-D-glucosamine = di-trans,octa-cis-undecaprenyl diphospho-[N-acetyl-alpha-D-glucosaminyl-(1-&gt;4)]-N-acetyl-alpha-D-muramoyl-L-alanyl-D-glutamyl-meso-2,6-diaminopimeloyl-D-alanyl-D-alanine + UDP + H(+). Its pathway is cell wall biogenesis; peptidoglycan biosynthesis. Cell wall formation. Catalyzes the transfer of a GlcNAc subunit on undecaprenyl-pyrophosphoryl-MurNAc-pentapeptide (lipid intermediate I) to form undecaprenyl-pyrophosphoryl-MurNAc-(pentapeptide)GlcNAc (lipid intermediate II). The sequence is that of UDP-N-acetylglucosamine--N-acetylmuramyl-(pentapeptide) pyrophosphoryl-undecaprenol N-acetylglucosamine transferase from Salinibacter ruber (strain DSM 13855 / M31).